The chain runs to 390 residues: Heme chaperone HemW (390 aa).

Residues 15-254 (PMPGQPFGVY…DARLSAAGFA (240 aa)) form the Radical SAM core domain. Tyrosine 24 serves as a coordination point for S-adenosyl-L-methionine. [4Fe-4S] cluster-binding residues include cysteine 30, cysteine 34, and cysteine 37. Residues glycine 82, 83–84 (GT), glutamate 115, glutamine 142, arginine 154, and aspartate 179 each bind S-adenosyl-L-methionine.

The protein belongs to the anaerobic coproporphyrinogen-III oxidase family. HemW subfamily. The cofactor is [4Fe-4S] cluster.

Its subcellular location is the cytoplasm. Functionally, probably acts as a heme chaperone, transferring heme to an unknown acceptor. Binds one molecule of heme per monomer, possibly covalently. Binds 1 [4Fe-4S] cluster. The cluster is coordinated with 3 cysteines and an exchangeable S-adenosyl-L-methionine. In Mycobacterium tuberculosis (strain CDC 1551 / Oshkosh), this protein is Heme chaperone HemW.